Here is a 429-residue protein sequence, read N- to C-terminus: Phosphoribosylamine--glycine ligase (429 aa).

The region spanning 109–316 is the ATP-grasp domain; it reads KDFLARHQIP…LVDLCLAACD (208 aa). 135–196 provides a ligand contact to ATP; the sequence is LREKGAPIVI…EEFLDGEEAS (62 aa). Glu286 and Asn288 together coordinate Mg(2+).

The protein belongs to the GARS family. Monomer. Requires Mg(2+) as cofactor. Mn(2+) serves as cofactor.

It catalyses the reaction 5-phospho-beta-D-ribosylamine + glycine + ATP = N(1)-(5-phospho-beta-D-ribosyl)glycinamide + ADP + phosphate + H(+). It functions in the pathway purine metabolism; IMP biosynthesis via de novo pathway; N(1)-(5-phospho-D-ribosyl)glycinamide from 5-phospho-alpha-D-ribose 1-diphosphate: step 2/2. This is Phosphoribosylamine--glycine ligase from Salmonella typhi.